The sequence spans 792 residues: MSDSIYAPHNKHKLEAARAADAAADDAATVSALVEPTDSTAQASHAAEQTIDAHQQAGDVEPERCHPHLTRPLLYLSGVDATMTDKELAGLVFDQVLPVRLKIDRTVGEGQTASGTVEFQTLDKAEKAYATVRPPIQLRINQDASIREPHPSAKPRLVKQLPPTSDDAFVYDLFRPFGPLRRAQCLLTNPAGIHTGFKGMAVLEFYSEQDAQRAESEMHCSEVGGKSISVAIDTATRKVSAAAAEFRPSAAAFVPAGSMSPSAPSFDPYPAGSRSVSTGSAASIYATSGAAPTHDTRNGAQKGARVPLQYSSQASTYVDPCNLFIKNLDPNMESNDLFDTFKRFGHIVSARVMRDDNGKSREFGFVSFTTPDEAQQALQAMDNAKLGTKKIIVRLHEPKTMRQEKLAARYNAANADNSDMSSNSPPTEARKADKRQSRSYFKAGVPSDASGLVDEEQLRSLSTVVRNELLSGEFTRRIPKVSSVTEAQLDDVVGELLSLKLADAVEALNNPISLIQRISDAREQLAQKSASTLTAPSPAPLSAEHPAMLGIQAQRSVSSASSTGEGGASVKERERLLKAVISVTESGAPVEDITDMIASLPKKDRALALFNPEFLKQKVDEAKDILDITDESGEDLSPPRASSGSAPVPLSVQTPASAIFKDASNGQSSISPGAAEAYTLSTLAALPAAEIVRLANSQSSSGLPLPKADPATVKATDDFIDSLQGKAAHDQKQKLGDQLFKKIRTFGVKGAPKLTIHLLDSEDLRALAHLMNSYEDVLKEKVQHKVAAGLNK.

The segment at 37 to 60 is disordered; that stretch reads TDSTAQASHAAEQTIDAHQQAGDV. RRM domains are found at residues 72 to 145, 154 to 235, and 321 to 398; these read PLLY…QDAS, KPRL…IDTA, and CNLF…LHEP. The segment covering 412–424 has biased composition (low complexity); that stretch reads AANADNSDMSSNS. Disordered regions lie at residues 412–438 and 630–649; these read AANA…RQSR and DESG…APVP. Polar residues predominate over residues 640–649; it reads RASSGSAPVP. In terms of domain architecture, PABC spans 715–792; sequence ATDDFIDSLQ…QHKVAAGLNK (78 aa).

Belongs to the polyadenylate-binding protein type-1 family. Part of large ribonucleoprotein complexes (mRNPs) containing RNA-binding proteins RRM4 and PAB1, endosome-binding protein UPA1, core scaffold protein UPA2 and associated factor GRP1. Interacts (via PABC domain) with UPA1 (via PAM2 domain).

It is found in the cytoplasm. The protein localises to the cytoskeleton. It localises to the endosome. Its function is as follows. Key RNA-binding protein involved in the formation of polar-growing hyphae which is essential for infection by the plant pathogen. During filamentation, assembles into particles that shuttle bidirectionally along microtubules to both poles. The RRM4 transport particles are part of the endosomal mRNP transport that regulates polarity of the infectious hyphae by transporting distinct mRNAs encoding, for example, the ubiquitin fusion protein UBI1, the small G protein RHO3, or the septin CDC3, from the nucleus to cell poles. Recognizes a broad spectrum of cargo mRNAs and precisely binds at stop codons, which constitute landmark sites of translation, suggesting an intimate connection of mRNA transport and translation. Also binds to the specific binding motif UAUG of cargo mRNAs via its third RRM. Plus-end-directed KIN3, a kinesin-3 type motor, mediates anterograde transport of RRM4-containing mRNPs whereas split dynein DYM1-DYN2 functions in retrograde movement of mRNPs. The polypeptide is RNA-binding protein RRM4 (Mycosarcoma maydis (Corn smut fungus)).